A 105-amino-acid chain; its full sequence is Nucleoid-associated protein SSP2277 (105 aa).

The tract at residues Met-1–Met-41 is disordered. The segment covering Met-7–Lys-16 has biased composition (low complexity). A compositionally biased stretch (basic and acidic residues) spans Lys-20 to Val-33.

The protein belongs to the YbaB/EbfC family. In terms of assembly, homodimer.

It is found in the cytoplasm. The protein localises to the nucleoid. Its function is as follows. Binds to DNA and alters its conformation. May be involved in regulation of gene expression, nucleoid organization and DNA protection. This is Nucleoid-associated protein SSP2277 from Staphylococcus saprophyticus subsp. saprophyticus (strain ATCC 15305 / DSM 20229 / NCIMB 8711 / NCTC 7292 / S-41).